Reading from the N-terminus, the 208-residue chain is Protein TIC 20-II, chloroplastic (208 aa).

The transit peptide at 1 to 49 (MASLCLSLHQTLTNPLSAPRCRPLSLSFPGSSTFSIRPSSRRATALTTR) directs the protein to the chloroplast. Transmembrane regions (helical) follow at residues 61-83 (VISIASYALPFFNSLQYGRFLFA), 101-121 (LYRSVPYASFVAFFGLYLGVV), 134-154 (AMQAVTLDVLLAVPVLLTRIL), and 172-192 (TGVFVFSFMCFVYGVVSSLLG).

This sequence belongs to the Tic20 family. As to quaternary structure, part of the Tic complex. As to expression, expressed in leaves, siliques and roots.

The protein localises to the plastid. The protein resides in the chloroplast inner membrane. May be involved in protein precursor import into chloroplasts. Not redundant with TIC20-I, TIC20-IV or TIC20-V. The sequence is that of Protein TIC 20-II, chloroplastic (TIC20-II) from Arabidopsis thaliana (Mouse-ear cress).